Here is a 299-residue protein sequence, read N- to C-terminus: MKLLMLCREPNLYSCRRLKMTAENAGHKMDILDPNRFLLKIQENRPHFALYYQPNQGTPYLLPDYDAVIPRFGTQSTKMGCSVLTHLAAKNIPCLNNPASFALARDKWLSLQALAAANIAVPVTVFAGQDFQAGSAVEKVSSPTILKTLNGSQGIGVILADRSQSAVSIMETLTLSHIPVLLQDFIGEAGASDIRCFVIGDKVVAAMQRSGQKGEFRANCHRGGITQQITLSDDEKLIAVRAAQALGLDVAGVDLIQSKKGLLVLEVNASPGLEMIEKTSGIDVATQMIAYLEKKIAGL.

One can recognise an ATP-grasp domain in the interval 111 to 293; that stretch reads LQALAAANIA…VATQMIAYLE (183 aa). ATP contacts are provided by residues Lys-147, 184 to 185, Asp-193, and 217 to 219; these read DF and RAN. Residues Asp-254, Glu-266, and Asn-268 each coordinate Mg(2+). Residues Asp-254, Glu-266, and Asn-268 each coordinate Mn(2+).

The protein belongs to the RimK family. Mg(2+) serves as cofactor. The cofactor is Mn(2+).

The polypeptide is Probable alpha-L-glutamate ligase (Mannheimia succiniciproducens (strain KCTC 0769BP / MBEL55E)).